Reading from the N-terminus, the 866-residue chain is Pentatricopeptide repeat-containing protein At1g15510, chloroplastic (866 aa).

A chloroplast-targeting transit peptide spans 1-52 (MASSAQSPHFYLNPGKSNSFQSKAYKQRNVNFYWNFGIRRLFLRKSQGLSVL). PPR repeat units follow at residues 58–92 (STHFSNSQLHGLCANGKLEEAMKLLNSMQELRVAV), 93–123 (DEDVFVALVRLCEWKRAQEEGSKVYSIALSS), 128–158 (GVELGNAFLAMFVRFGNLVDAWYVFGKMSER), 159–194 (NLFSWNVLVGGYAKQGYFDEAMCLYHRMLWVGGVKP), 195–229 (DVYTFPCVLRTCGGIPDLARGKEVHVHVVRYGYEL), 230–260 (DIDVVNALITMYVKCGDVKSARLLFDRMPRR), 261–295 (DIISWNAMISGYFENGMCHEGLELFFAMRGLSVDP), 296–330 (DLMTLTSVISACELLGDRRLGRDIHAYVITTGFAV), 331–365 (DISVCNSLTQMYLNAGSWREAEKLFSRMERKDIVS), 366–396 (WTTMISGYEYNFLPDKAIDTYRMMDQDSVKP), 397–431 (DEITVAAVLSACATLGDLDTGVELHKLAIKARLIS), 432–466 (YVIVANNLINMYSKCKCIDKALDIFHNIPRKNVIS), 467–493 (WTSIIAGLRLNNRCFEALIFLRQMKMT), 497–531 (NAITLTAALAACARIGALMCGKEIHAHVLRTGVGL), 532–561 (DDFLPNALLDMYVRCGRMNTAWSQFNSQKK), 562–596 (DVTSWNILLTGYSERGQGSMVVELFDRMVKSRVRP), 597–631 (DEITFISLLCGCSKSQMVRQGLMYFSKMEDYGVTP), and 632–662 (NLKHYACVVDLLGRAGELQEAHKFIQKMPVT). Residues 667-742 (VWGALLNACR…DAGCSWVEVK (76 aa)) form a type E motif region. Residues 743–773 (GKVHAFLSDDKYHPQTKEINTVLEGFYEKMS) are type E(+) motif. The interval 774-866 (EVGLTKISES…FKDGECSCGD (93 aa)) is type DYW motif.

This sequence belongs to the PPR family. PCMP-H subfamily.

The protein resides in the plastid. Its subcellular location is the chloroplast. Regulates the RNA editing of the chloroplast transcript accD, and is essential for the early stages of chloroplast biogenesis. Required for the RNA editing of the chloroplast transcript ndhF. The protein is Pentatricopeptide repeat-containing protein At1g15510, chloroplastic (PCMP-H73) of Arabidopsis thaliana (Mouse-ear cress).